The sequence spans 555 residues: MVKRGKKTKYLFVTGGVVSSLGKGLSAASIGALLENRGLEVQHLKLDPYINVDPGTMSPFQHGEVFVTDDGAETDLDLGHYERFTSAKMTRRNNYTTGRIYQNVIQRERRGEYLGKTVQVIPHITDEIKAVIREAAGGADILIVEVGGTVGDIESLPFLEAIRQMKYDVGEENAVYAHLTLVPFIAAAGELKTKPTQHSVKELREIGIQPDLLLCRSDREIPRDMKDKIALFCNVDPSAVFTALDVPSIYEVPLSLHREGLDDKLAELFNIWSRAPRLERWETIVDKVKNPRRGEVRIGIVGKYVELHESYKSLNEALVHGGIANDARVKLAFIDSTKLEEGDLSDLEKVDAILVPGGFGIRGTEGKILGVKYAREHKVPFFGICLGLQMAVIEMARNVLGLAGANSLEFDEQTPHPVVTLMEGQKGVTDKGGTMRLGAYPCALKEGTKARALYGADLVHERHRHRFEFNNDYRAQFEAAGMVFSGVNPDLGLVEMIELPGQHFVGCQFHPEFRSKPFAPHPLFAGFVKAALEHRDAQQRQPPAEVKKLAVGKNG.

The amidoligase domain stretch occupies residues 1–271 (MVKRGKKTKY…DDKLAELFNI (271 aa)). CTP is bound at residue serine 19. Serine 19 provides a ligand contact to UTP. ATP is bound by residues 20–25 (SLGKGL) and aspartate 77. Residues aspartate 77 and glutamate 145 each coordinate Mg(2+). CTP-binding positions include 152-154 (DIE), 192-197 (KTKPTQ), and lysine 228. Residues 192 to 197 (KTKPTQ) and lysine 228 contribute to the UTP site. A Glutamine amidotransferase type-1 domain is found at 297-537 (RIGIVGKYVE…VKAALEHRDA (241 aa)). Glycine 358 serves as a coordination point for L-glutamine. Catalysis depends on cysteine 385, which acts as the Nucleophile; for glutamine hydrolysis. L-glutamine contacts are provided by residues 386–389 (LGLQ), glutamate 409, and arginine 466. Residues histidine 510 and glutamate 512 contribute to the active site. The disordered stretch occupies residues 535–555 (RDAQQRQPPAEVKKLAVGKNG).

Belongs to the CTP synthase family. As to quaternary structure, homotetramer.

It catalyses the reaction UTP + L-glutamine + ATP + H2O = CTP + L-glutamate + ADP + phosphate + 2 H(+). It carries out the reaction L-glutamine + H2O = L-glutamate + NH4(+). The enzyme catalyses UTP + NH4(+) + ATP = CTP + ADP + phosphate + 2 H(+). It functions in the pathway pyrimidine metabolism; CTP biosynthesis via de novo pathway; CTP from UDP: step 2/2. Allosterically activated by GTP, when glutamine is the substrate; GTP has no effect on the reaction when ammonia is the substrate. The allosteric effector GTP functions by stabilizing the protein conformation that binds the tetrahedral intermediate(s) formed during glutamine hydrolysis. Inhibited by the product CTP, via allosteric rather than competitive inhibition. Its function is as follows. Catalyzes the ATP-dependent amination of UTP to CTP with either L-glutamine or ammonia as the source of nitrogen. Regulates intracellular CTP levels through interactions with the four ribonucleotide triphosphates. This Anaeromyxobacter dehalogenans (strain 2CP-1 / ATCC BAA-258) protein is CTP synthase.